The chain runs to 350 residues: Glycosyltransferase 8 domain-containing protein 2 (350 aa).

At Met-1–Lys-6 the chain is on the cytoplasmic side. A helical; Signal-anchor for type II membrane protein transmembrane segment spans residues Ile-7 to Tyr-24. Residues Lys-25–Asn-349 are Lumenal-facing. N-linked (GlcNAc...) asparagine glycosylation occurs at Asn-234.

Belongs to the glycosyltransferase 8 family.

The protein resides in the membrane. This is Glycosyltransferase 8 domain-containing protein 2 (GLT8D2) from Bos taurus (Bovine).